The following is an 825-amino-acid chain: Beta-glucosidase (825 aa).

The signal sequence occupies residues 1 to 20 (MLLPLYGLASFLVLSQAALV). N-linked (GlcNAc...) asparagine glycosylation is found at Asn-21, Asn-74, Asn-97, Asn-230, and Asn-271. Residue Asp-299 is part of the active site. 11 N-linked (GlcNAc...) asparagine glycosylation sites follow: Asn-328, Asn-335, Asn-537, Asn-550, Asn-556, Asn-578, Asn-667, Asn-690, Asn-718, Asn-733, and Asn-761.

This sequence belongs to the glycosyl hydrolase 3 family. Homotetramer.

The enzyme catalyses Hydrolysis of terminal, non-reducing beta-D-glucosyl residues with release of beta-D-glucose.. The protein operates within glycan metabolism; cellulose degradation. The chain is Beta-glucosidase from Wickerhamomyces anomalus (Yeast).